A 280-amino-acid polypeptide reads, in one-letter code: Clathrin adapter accessory protein LAA2 (280 aa).

The tract at residues 1–26 is disordered; that stretch reads MSDRDQIEPVTNALDAESDSSDDFGN. The Ear-binding motif signature appears at 19–30; that stretch reads DSSDDFGNFSDA.

Interacts with the clathrin-associated adapter complex AP-1. Interacts with LAA1.

It is found in the cytoplasmic vesicle. The protein resides in the clathrin-coated vesicle. Its function is as follows. Involved in localization of clathrin-associated adapter complex (AP-1) and subsequent AP-1-mediated clathrin-coated vesicle cargo loading. Directly mediates the interaction between LAA1 and AP-1 which is required for AP-1 localization. In complex with LAA1, cooperates with the small GTPase ARF1 and the phosphatidyl-inositol-4-phosphate (PI4P) synthesis to confer temporal specificity to AP-1 recruitment. In Saccharomyces cerevisiae (strain ATCC 204508 / S288c) (Baker's yeast), this protein is Clathrin adapter accessory protein LAA2.